The chain runs to 286 residues: N-alpha-acetyltransferase 80 (286 aa).

The disordered stretch occupies residues 33-54 (TFNPGPTELTLDPEHQPEETPA). In terms of domain architecture, N-acetyltransferase spans 60–207 (LTLEPVHRRP…VFTSRRLPAT (148 aa)). Substrate contacts are provided by residues R85 and 90 to 93 (RLHS). Acetyl-CoA contacts are provided by residues 141–143 (VVV), 149–154 (GRGFGR), and Q179. A disordered region spans residues 212–269 (FPTAPSPRPPRKAPNLTAQAAPRGPKGPPLPPPPPLPECLTISPPVPSGPPSKSLLET). The segment covering 236 to 248 (PKGPPLPPPPPLP) has biased composition (pro residues).

This sequence belongs to the acetyltransferase family. Strongly expressed in heart and skeletal muscle, followed by brain and pancreas, with weak expression in kidney, liver, and lung and no expression in placenta.

The protein localises to the cytoplasm. It localises to the cytosol. It catalyses the reaction N-terminal L-aspartyl-L-aspartyl-L-aspartyl-[protein] + acetyl-CoA = N-terminal N-acetyl-L-aspartyl-L-aspartyl-L-aspartyl-[protein] + CoA + H(+). It carries out the reaction N-terminal L-glutamyl-L-glutamyl-L-glutamyl-[protein] + acetyl-CoA = N-terminal N-acetyl-L-glutamyl-L-glutamyl-L-glutamyl-[protein] + CoA + H(+). N-alpha-acetyltransferase that specifically mediates the acetylation of the acidic amino terminus of processed forms of beta- and gamma-actin (ACTB and ACTG, respectively). N-terminal acetylation of processed beta- and gamma-actin regulates actin filament depolymerization and elongation. In vivo, preferentially displays N-terminal acetyltransferase activity towards acid N-terminal sequences starting with Asp-Asp-Asp and Glu-Glu-Glu. In vitro, shows high activity towards Met-Asp-Glu-Leu and Met-Asp-Asp-Asp. May act as a tumor suppressor. The polypeptide is N-alpha-acetyltransferase 80 (Homo sapiens (Human)).